The following is a 365-amino-acid chain: UDP-N-acetylglucosamine--N-acetylmuramyl-(pentapeptide) pyrophosphoryl-undecaprenol N-acetylglucosamine transferase (365 aa).

Residues T19–G21, N131, R170, S201, I255, A274–E279, and Q300 contribute to the UDP-N-acetyl-alpha-D-glucosamine site.

The protein belongs to the glycosyltransferase 28 family. MurG subfamily.

It is found in the cell inner membrane. It catalyses the reaction di-trans,octa-cis-undecaprenyl diphospho-N-acetyl-alpha-D-muramoyl-L-alanyl-D-glutamyl-meso-2,6-diaminopimeloyl-D-alanyl-D-alanine + UDP-N-acetyl-alpha-D-glucosamine = di-trans,octa-cis-undecaprenyl diphospho-[N-acetyl-alpha-D-glucosaminyl-(1-&gt;4)]-N-acetyl-alpha-D-muramoyl-L-alanyl-D-glutamyl-meso-2,6-diaminopimeloyl-D-alanyl-D-alanine + UDP + H(+). Its pathway is cell wall biogenesis; peptidoglycan biosynthesis. Functionally, cell wall formation. Catalyzes the transfer of a GlcNAc subunit on undecaprenyl-pyrophosphoryl-MurNAc-pentapeptide (lipid intermediate I) to form undecaprenyl-pyrophosphoryl-MurNAc-(pentapeptide)GlcNAc (lipid intermediate II). The protein is UDP-N-acetylglucosamine--N-acetylmuramyl-(pentapeptide) pyrophosphoryl-undecaprenol N-acetylglucosamine transferase of Acinetobacter baumannii (strain SDF).